The following is a 303-amino-acid chain: Putative ankyrin repeat protein R601 (303 aa).

4 ANK repeats span residues aspartate 86–valine 115, asparagine 117–valine 146, aspartate 147–serine 176, and asparagine 200–tyrosine 233.

The protein is Putative ankyrin repeat protein R601 of Acanthamoeba polyphaga (Amoeba).